We begin with the raw amino-acid sequence, 102 residues long: NADH-quinone oxidoreductase subunit K (102 aa).

3 helical membrane passes run 6–26, 30–50, and 63–83; these read LIGIMILAAGLFAVGVFGVLA, MLFQLVALEVALSGPALGFIA, and MFILVLTLAAAEVAVGLALFL.

It belongs to the complex I subunit 4L family. NDH-1 is composed of 14 different subunits. Subunits NuoA, H, J, K, L, M, N constitute the membrane sector of the complex.

Its subcellular location is the cell inner membrane. It catalyses the reaction a quinone + NADH + 5 H(+)(in) = a quinol + NAD(+) + 4 H(+)(out). Its function is as follows. NDH-1 shuttles electrons from NADH, via FMN and iron-sulfur (Fe-S) centers, to quinones in the respiratory chain. The immediate electron acceptor for the enzyme in this species is believed to be ubiquinone. Couples the redox reaction to proton translocation (for every two electrons transferred, four hydrogen ions are translocated across the cytoplasmic membrane), and thus conserves the redox energy in a proton gradient. This Rhodopseudomonas palustris (strain TIE-1) protein is NADH-quinone oxidoreductase subunit K.